The primary structure comprises 88 residues: Yop proteins translocation protein S (88 aa).

2 helical membrane passes run 15-35 (WLVLVLSMPPVLVAAVVGTLV) and 49-69 (LGFVIKLIAVVVTLFATASWL).

It belongs to the FliQ/MopD/SpaQ family.

Its subcellular location is the cell membrane. Component of the Yop secretion machinery. This is Yop proteins translocation protein S (yscS) from Yersinia pestis.